A 158-amino-acid polypeptide reads, in one-letter code: 6,7-dimethyl-8-ribityllumazine synthase (158 aa).

5-amino-6-(D-ribitylamino)uracil is bound by residues Phe-23, 61 to 63, and 85 to 87; these read SFE and AVI. 90 to 91 is a (2S)-2-hydroxy-3-oxobutyl phosphate binding site; the sequence is ET. His-93 acts as the Proton donor in catalysis. Residue Phe-118 coordinates 5-amino-6-(D-ribitylamino)uracil. Arg-132 is a binding site for (2S)-2-hydroxy-3-oxobutyl phosphate.

Belongs to the DMRL synthase family.

The catalysed reaction is (2S)-2-hydroxy-3-oxobutyl phosphate + 5-amino-6-(D-ribitylamino)uracil = 6,7-dimethyl-8-(1-D-ribityl)lumazine + phosphate + 2 H2O + H(+). It functions in the pathway cofactor biosynthesis; riboflavin biosynthesis; riboflavin from 2-hydroxy-3-oxobutyl phosphate and 5-amino-6-(D-ribitylamino)uracil: step 1/2. Catalyzes the formation of 6,7-dimethyl-8-ribityllumazine by condensation of 5-amino-6-(D-ribitylamino)uracil with 3,4-dihydroxy-2-butanone 4-phosphate. This is the penultimate step in the biosynthesis of riboflavin. This is 6,7-dimethyl-8-ribityllumazine synthase from Prochlorococcus marinus (strain MIT 9515).